The chain runs to 250 residues: Agamous-like MADS-box protein AGL9 homolog (250 aa).

The MADS-box domain occupies 3 to 57 (RGRVELKMIENKINRQVTFAKRRKRLLKKAYELSVLCDAEVALIIFSNRGKLYEF). The region spanning 87–177 (TQSSQQEYLK…KRRFEESSQA (91 aa)) is the K-box domain.

As to expression, expressed in petals and weakly in sepals but not in the column (gynostemium).

Its subcellular location is the nucleus. Functionally, probable transcription factor active in inflorescence development and floral organogenesis. The sequence is that of Agamous-like MADS-box protein AGL9 homolog from Aranda deborah (Orchid).